The chain runs to 874 residues: Alanine--tRNA ligase (874 aa).

Positions 562, 566, 664, and 668 each coordinate Zn(2+).

This sequence belongs to the class-II aminoacyl-tRNA synthetase family. It depends on Zn(2+) as a cofactor.

It is found in the cytoplasm. It carries out the reaction tRNA(Ala) + L-alanine + ATP = L-alanyl-tRNA(Ala) + AMP + diphosphate. Catalyzes the attachment of alanine to tRNA(Ala) in a two-step reaction: alanine is first activated by ATP to form Ala-AMP and then transferred to the acceptor end of tRNA(Ala). Also edits incorrectly charged Ser-tRNA(Ala) and Gly-tRNA(Ala) via its editing domain. The protein is Alanine--tRNA ligase of Neisseria meningitidis serogroup C (strain 053442).